The primary structure comprises 589 residues: Aspartate--tRNA(Asp/Asn) ligase (589 aa).

Glu-170 is an L-aspartate binding site. Residues 194–197 (QLFK) form an aspartate region. Arg-216 provides a ligand contact to L-aspartate. ATP is bound by residues 216 to 218 (RDE) and Gln-225. His-448 serves as a coordination point for L-aspartate. Glu-482 serves as a coordination point for ATP. Arg-489 provides a ligand contact to L-aspartate. 534–537 (GWDR) serves as a coordination point for ATP. Residues 563–589 (PLTDAPASITAQQRKESGIDTKPKEVE) are disordered. Residues 575-589 (QRKESGIDTKPKEVE) are compositionally biased toward basic and acidic residues.

Belongs to the class-II aminoacyl-tRNA synthetase family. Type 1 subfamily. In terms of assembly, homodimer.

It is found in the cytoplasm. The catalysed reaction is tRNA(Asx) + L-aspartate + ATP = L-aspartyl-tRNA(Asx) + AMP + diphosphate. In terms of biological role, aspartyl-tRNA synthetase with relaxed tRNA specificity since it is able to aspartylate not only its cognate tRNA(Asp) but also tRNA(Asn). Reaction proceeds in two steps: L-aspartate is first activated by ATP to form Asp-AMP and then transferred to the acceptor end of tRNA(Asp/Asn). This chain is Aspartate--tRNA(Asp/Asn) ligase, found in Mycobacterium leprae (strain Br4923).